The following is a 488-amino-acid chain: Leucine-rich repeat-containing protein 74A (488 aa).

LRR repeat units lie at residues 134–155, 162–182, 191–212, 219–239, 247–268, 275–296, 303–324, and 331–351; these read AVTK…SLVE, YLQE…RIIS, SIWS…LLCQ, QIKK…EHLG, GLTS…ALCN, TLTK…ALGE, CLVY…KISK, and SLRV…ILLI.

The chain is Leucine-rich repeat-containing protein 74A from Homo sapiens (Human).